A 279-amino-acid chain; its full sequence is Mirror-image polydactyly gene 1 protein homolog (279 aa).

A compositionally biased stretch (basic and acidic residues) spans 1–11; that stretch reads MNSEQSIRELG. The tract at residues 1–21 is disordered; it reads MNSEQSIRELGNEVPSEDLEL. 2 coiled-coil regions span residues 65-169 and 218-255; these read LNKE…MLEN and AEEM…STNN. A disordered region spans residues 247 to 268; that stretch reads KQNQTSTNNTKHPTAKNNQEHT. Polar residues predominate over residues 248-263; the sequence is QNQTSTNNTKHPTAKN.

This chain is Mirror-image polydactyly gene 1 protein homolog (Mipol1), found in Mus musculus (Mouse).